The following is a 156-amino-acid chain: ATP synthase subunit b (156 aa).

Residues 11–31 (AIAFILFVWFCMKYVWPPLMA) form a helical membrane-spanning segment.

Belongs to the ATPase B chain family. In terms of assembly, F-type ATPases have 2 components, F(1) - the catalytic core - and F(0) - the membrane proton channel. F(1) has five subunits: alpha(3), beta(3), gamma(1), delta(1), epsilon(1). F(0) has three main subunits: a(1), b(2) and c(10-14). The alpha and beta chains form an alternating ring which encloses part of the gamma chain. F(1) is attached to F(0) by a central stalk formed by the gamma and epsilon chains, while a peripheral stalk is formed by the delta and b chains.

It is found in the cell inner membrane. F(1)F(0) ATP synthase produces ATP from ADP in the presence of a proton or sodium gradient. F-type ATPases consist of two structural domains, F(1) containing the extramembraneous catalytic core and F(0) containing the membrane proton channel, linked together by a central stalk and a peripheral stalk. During catalysis, ATP synthesis in the catalytic domain of F(1) is coupled via a rotary mechanism of the central stalk subunits to proton translocation. Functionally, component of the F(0) channel, it forms part of the peripheral stalk, linking F(1) to F(0). The sequence is that of ATP synthase subunit b from Salmonella agona (strain SL483).